A 126-amino-acid polypeptide reads, in one-letter code: MAVLGLGTDIVEMARIEAVVERSGDRLARRVLSEAEWELYQQHQQPVRFLAKRFAVKEAVAKAFGTGIRNGLAFNQFEVFNDGLGKPNIRLHARAAELAKEMGVTSIHVSLADERRYACATVIIEG.

Residues Asp9 and Glu58 each contribute to the Mg(2+) site.

It belongs to the P-Pant transferase superfamily. AcpS family. Requires Mg(2+) as cofactor.

The protein localises to the cytoplasm. The enzyme catalyses apo-[ACP] + CoA = holo-[ACP] + adenosine 3',5'-bisphosphate + H(+). In terms of biological role, transfers the 4'-phosphopantetheine moiety from coenzyme A to a Ser of acyl-carrier-protein. This is Holo-[acyl-carrier-protein] synthase from Serratia proteamaculans (strain 568).